The primary structure comprises 310 residues: Ribosomal RNA small subunit methyltransferase H (310 aa).

Residues 33–35 (AGH), Asp-53, Phe-79, Asp-100, and Gln-107 each bind S-adenosyl-L-methionine.

The protein belongs to the methyltransferase superfamily. RsmH family.

The protein resides in the cytoplasm. The enzyme catalyses cytidine(1402) in 16S rRNA + S-adenosyl-L-methionine = N(4)-methylcytidine(1402) in 16S rRNA + S-adenosyl-L-homocysteine + H(+). Specifically methylates the N4 position of cytidine in position 1402 (C1402) of 16S rRNA. This chain is Ribosomal RNA small subunit methyltransferase H, found in Desulfitobacterium hafniense (strain DSM 10664 / DCB-2).